The following is a 392-amino-acid chain: Succinyl-diaminopimelate desuccinylase (392 aa).

H75 contributes to the Zn(2+) binding site. D77 is a catalytic residue. Position 108 (D108) interacts with Zn(2+). E147 (proton acceptor) is an active-site residue. 3 residues coordinate Zn(2+): E148, E176, and H365.

It belongs to the peptidase M20A family. DapE subfamily. As to quaternary structure, homodimer. It depends on Zn(2+) as a cofactor. Requires Co(2+) as cofactor.

The enzyme catalyses N-succinyl-(2S,6S)-2,6-diaminopimelate + H2O = (2S,6S)-2,6-diaminopimelate + succinate. Its pathway is amino-acid biosynthesis; L-lysine biosynthesis via DAP pathway; LL-2,6-diaminopimelate from (S)-tetrahydrodipicolinate (succinylase route): step 3/3. Its function is as follows. Catalyzes the hydrolysis of N-succinyl-L,L-diaminopimelic acid (SDAP), forming succinate and LL-2,6-diaminopimelate (DAP), an intermediate involved in the bacterial biosynthesis of lysine and meso-diaminopimelic acid, an essential component of bacterial cell walls. This is Succinyl-diaminopimelate desuccinylase from Rhodopseudomonas palustris (strain BisB18).